Reading from the N-terminus, the 495-residue chain is Putative lon protease homolog (495 aa).

52–59 (GPPGVGKS) serves as a coordination point for ATP. Residues 471–495 (YSSETTGSQRDSTYNYANMDDRSYE) form a disordered region. A compositionally biased stretch (polar residues) spans 472 to 486 (SSETTGSQRDSTYNY).

This sequence belongs to the peptidase S16 family.

This is Putative lon protease homolog from Thermoplasma volcanium (strain ATCC 51530 / DSM 4299 / JCM 9571 / NBRC 15438 / GSS1).